The chain runs to 147 residues: Hemoglobin subunit epsilon (147 aa).

The region spanning H3 to H147 is the Globin domain. Residue S51 is modified to Phosphoserine. H64 and H93 together coordinate heme b.

Belongs to the globin family. In terms of tissue distribution, red blood cells.

Hemoglobin epsilon chain is a beta-type chain found in early embryos. The polypeptide is Hemoglobin subunit epsilon (HBE1) (Oryctolagus cuniculus (Rabbit)).